Here is a 446-residue protein sequence, read N- to C-terminus: Na(+)-translocating NADH-quinone reductase subunit A (446 aa).

Belongs to the NqrA family. Composed of six subunits; NqrA, NqrB, NqrC, NqrD, NqrE and NqrF.

It catalyses the reaction a ubiquinone + n Na(+)(in) + NADH + H(+) = a ubiquinol + n Na(+)(out) + NAD(+). Functionally, NQR complex catalyzes the reduction of ubiquinone-1 to ubiquinol by two successive reactions, coupled with the transport of Na(+) ions from the cytoplasm to the periplasm. NqrA to NqrE are probably involved in the second step, the conversion of ubisemiquinone to ubiquinol. The chain is Na(+)-translocating NADH-quinone reductase subunit A from Vibrio campbellii (strain ATCC BAA-1116).